Reading from the N-terminus, the 617-residue chain is MANSTGLQFTVKVGALPDTTFAVVDFELSEALNQPFALSLNLASSQPGIDFGAVLDQPCELLVWYEGELQRRVSGIVSRFAQGDTGFRRTRYQAEVRPALWRLGLRTNARIFQTQKPDAIISTLLEEAGITDYAFALRHDHAVREYCVQYRESDLAFINRLAAEEGLFYFHEFEAGKHRVVFADDAGALAKGPELFFNLATQGLSEGAYVRRFRYAEAVSTAEVALKDYSFKTPAYGLLHNKMSSELAHQRESYQHFDYPGRFKQDPSGKAFTGYRLDALRAGAMTGNGESNAAELRPGSSFTLTEHPNPAFNLAWQVVAVAHSGQQPQALEEESGGEPTTLSNSFEVVKATTTWRAALPYKPMVDGPQIATVVGPAGEEIYCDEFGRVKLQFPWDRYGASDDQSSCWVRVSQGWAGGQYGLIAIPRIGHEVVVSFLEGDPDQPIVTGRTFHATNPSPYPLPASKTRTSLRTSTHKGAGFNELRFEDQAGQEEVFIHAQKDMNTVVLNNRSTSVNASHTENVGGDQTVVVQHNQTVSVKENQVTEIQGEQTVAVTKNRHTTVDDNESLQVKKNIAIQSQSGDVLIATAGGFIAIDKDGNISITGKGLVLNGTRIDLN.

The disordered stretch occupies residues 449-469 (RTFHATNPSPYPLPASKTRTS).

The protein belongs to the VgrG protein family.

In terms of biological role, a Vgr protein that is probably part of a type VI secretion system (T6SS). May be required for export of proteins involved in Rhs-mediated cellular contact-dependent growth inhibition (CDI). This is Putative type VI secretion system protein VgrGB (vgrGB) from Dickeya dadantii (strain 3937) (Erwinia chrysanthemi (strain 3937)).